Consider the following 533-residue polypeptide: Bifunctional purine biosynthesis protein PurH (533 aa).

The 148-residue stretch at 1-148 (MDTPRPIKRA…KNHKDVTIVV (148 aa)) folds into the MGS-like domain.

This sequence belongs to the PurH family.

It carries out the reaction (6R)-10-formyltetrahydrofolate + 5-amino-1-(5-phospho-beta-D-ribosyl)imidazole-4-carboxamide = 5-formamido-1-(5-phospho-D-ribosyl)imidazole-4-carboxamide + (6S)-5,6,7,8-tetrahydrofolate. The enzyme catalyses IMP + H2O = 5-formamido-1-(5-phospho-D-ribosyl)imidazole-4-carboxamide. It functions in the pathway purine metabolism; IMP biosynthesis via de novo pathway; 5-formamido-1-(5-phospho-D-ribosyl)imidazole-4-carboxamide from 5-amino-1-(5-phospho-D-ribosyl)imidazole-4-carboxamide (10-formyl THF route): step 1/1. The protein operates within purine metabolism; IMP biosynthesis via de novo pathway; IMP from 5-formamido-1-(5-phospho-D-ribosyl)imidazole-4-carboxamide: step 1/1. This Colwellia psychrerythraea (strain 34H / ATCC BAA-681) (Vibrio psychroerythus) protein is Bifunctional purine biosynthesis protein PurH.